The primary structure comprises 385 residues: Cytochrome b (385 aa).

Helical transmembrane passes span 32–52, 76–98, 113–133, and 179–199; these read MGSL…FMAM, YILR…MHMA, LWNV…LGYC, and FFAL…MHLM. Residues His-82 and His-96 each contribute to the heme b site. The heme b site is built by His-183 and His-197. His-202 contributes to the a ubiquinone binding site. Helical transmembrane passes span 225–245, 289–309, 321–341, and 348–368; these read FIFK…LFVF, LLGV…PFTD, LSKF…QIGA, and YVLM…IIVP.

It belongs to the cytochrome b family. As to quaternary structure, fungal cytochrome b-c1 complex contains 10 subunits; 3 respiratory subunits, 2 core proteins and 5 low-molecular weight proteins. Cytochrome b-c1 complex is a homodimer. Heme b is required as a cofactor.

Its subcellular location is the mitochondrion inner membrane. Functionally, component of the ubiquinol-cytochrome c reductase complex (complex III or cytochrome b-c1 complex) that is part of the mitochondrial respiratory chain. The b-c1 complex mediates electron transfer from ubiquinol to cytochrome c. Contributes to the generation of a proton gradient across the mitochondrial membrane that is then used for ATP synthesis. This is Cytochrome b (COB) from Saccharomyces paradoxus (Yeast).